The chain runs to 451 residues: Phosphoglucosamine mutase (451 aa).

S101 serves as the catalytic Phosphoserine intermediate. Mg(2+) contacts are provided by S101, D243, D245, and D247. Phosphoserine is present on S101.

Belongs to the phosphohexose mutase family. Mg(2+) is required as a cofactor. In terms of processing, activated by phosphorylation.

It carries out the reaction alpha-D-glucosamine 1-phosphate = D-glucosamine 6-phosphate. In terms of biological role, catalyzes the conversion of glucosamine-6-phosphate to glucosamine-1-phosphate. This is Phosphoglucosamine mutase from Thermodesulfovibrio yellowstonii (strain ATCC 51303 / DSM 11347 / YP87).